Here is a 352-residue protein sequence, read N- to C-terminus: MDSESQLLEGAVEKIGLIPRSIIRTINRFQQQLFPDAVEYFIQEFRVSRSQVLVSLQCLLTLIIIPLFIHFFAKTVFLTPCIEYVWNTYKTDIFLNSYQQEQALTEMRNFEEILYFDLLVQSNEEPVTQEGLPFTFLQHSQGSVDEEKTTAPITAYAVSNMGNPETATIAPQHLHGSVGGKLESEFRFTNPSFVGKNNVTGATTITAAIPLQKKLVDLAQSANKQSIAALTNLFADLLTLFSLIILFIRLKSQIIILKSFLIETFYSLNDTTKSFMLIFSTDLLVGFHSPRGWEIFLDFILSRFGLPHDENIILLFVATFPVLLDSVIKYWIFRYLNKISPSTVATYHAMIE.

Transmembrane regions (helical) follow at residues valine 52–phenylalanine 72, isoleucine 227–phenylalanine 247, and isoleucine 312–isoleucine 332.

The protein belongs to the CemA family.

The protein resides in the plastid. The protein localises to the chloroplast inner membrane. The catalysed reaction is K(+)(in) + H(+)(out) = K(+)(out) + H(+)(in). Contributes to K(+)/H(+) antiport activity by supporting proton efflux to control proton extrusion and homeostasis in chloroplasts in a light-dependent manner to modulate photosynthesis. Prevents excessive induction of non-photochemical quenching (NPQ) under continuous-light conditions. Indirectly promotes efficient inorganic carbon uptake into chloroplasts. In Oltmannsiellopsis viridis (Marine flagellate), this protein is Potassium/proton antiporter CemA.